A 238-amino-acid polypeptide reads, in one-letter code: Uridylate kinase (238 aa).

12–15 (KLSG) provides a ligand contact to ATP. Gly54 serves as a coordination point for UMP. 2 residues coordinate ATP: Gly55 and Arg59. Residues Asp74 and 135–142 (TGNPFFTT) each bind UMP. ATP-binding residues include Thr162, Tyr168, and Asp171.

This sequence belongs to the UMP kinase family. Homohexamer.

The protein localises to the cytoplasm. The enzyme catalyses UMP + ATP = UDP + ADP. The protein operates within pyrimidine metabolism; CTP biosynthesis via de novo pathway; UDP from UMP (UMPK route): step 1/1. With respect to regulation, inhibited by UTP. Catalyzes the reversible phosphorylation of UMP to UDP. The sequence is that of Uridylate kinase from Azoarcus sp. (strain BH72).